Here is a 56-residue protein sequence, read N- to C-terminus: Bacteriocin sublancin-168 (56 aa).

Positions 1 to 19 are excised as a propeptide; it reads MEKLFKEVKLEELENQKGS. 2 cysteine pairs are disulfide-bonded: cysteine 26–cysteine 55 and cysteine 33–cysteine 48. Cysteine 41 carries an S-linked (Glc) cysteine; by host glycan.

In terms of assembly, monomer. Post-translationally, production of active sublancin-168 requires at least one thiol-disulfide oxidoreductase (BdbB or, in its absence, BdbC). Membrane translocation and cleavage of the precursor are probably performed by SunT.

The protein localises to the secreted. Functionally, bacteriocin active against Gram-positive bacteria. Inhibits B.cereus spore outgrowth, after the germination stage, approximately 1000-fold better than it inhibits exponential growth of the same cells. Inhibits B.subtilis strain ATCC 6633. The sequence is that of Bacteriocin sublancin-168 (sunA) from Bacillus pumilus (Bacillus mesentericus).